The primary structure comprises 116 residues: Large ribosomal subunit protein bL21c (116 aa).

Belongs to the bacterial ribosomal protein bL21 family. In terms of assembly, part of the 50S ribosomal subunit.

The protein resides in the plastid. The protein localises to the chloroplast. This protein binds to 23S rRNA. The polypeptide is Large ribosomal subunit protein bL21c (Marchantia polymorpha (Common liverwort)).